Here is a 393-residue protein sequence, read N- to C-terminus: Lipid-A-disaccharide synthase (393 aa).

This sequence belongs to the LpxB family.

It carries out the reaction a lipid X + a UDP-2-N,3-O-bis[(3R)-3-hydroxyacyl]-alpha-D-glucosamine = a lipid A disaccharide + UDP + H(+). It functions in the pathway bacterial outer membrane biogenesis; LPS lipid A biosynthesis. Functionally, condensation of UDP-2,3-diacylglucosamine and 2,3-diacylglucosamine-1-phosphate to form lipid A disaccharide, a precursor of lipid A, a phosphorylated glycolipid that anchors the lipopolysaccharide to the outer membrane of the cell. The polypeptide is Lipid-A-disaccharide synthase (Rhodopseudomonas palustris (strain ATCC BAA-98 / CGA009)).